The primary structure comprises 705 residues: Complement C1r subcomponent (705 aa).

An N-terminal signal peptide occupies residues 1–17; sequence MWLLYLLVPALFCRAGG. Residues 18–141 enclose the CUB 1 domain; the sequence is SIPIPQKLFG…KGFLAYYQAV (124 aa). 3 residues coordinate Ca(2+): Glu66, Asp74, and Asp119. A disulfide bond links Cys71 and Cys89. An N-linked (GlcNAc...) asparagine glycan is attached at Asn125. Asp142, Leu143, and Glu145 together coordinate Ca(2+). Positions 142-190 constitute an EGF-like; calcium-binding domain; the sequence is DLDECASRSKSGEEDPQPQCQHLCHNYVGGYFCSCRPGYELQEDTHSCQ. 4 disulfides stabilise this stretch: Cys146-Cys165, Cys161-Cys174, Cys176-Cys189, and Cys193-Cys220. Positions 167, 168, and 171 each coordinate Ca(2+). Asn167 bears the (3R)-3-hydroxyasparagine mark. One can recognise a CUB 2 domain in the interval 193–305; sequence CSSELYTEAS…RGWKLRYTTE (113 aa). At Ser206 the chain carries Phosphoserine; by CK2. N-linked (GlcNAc...) asparagine glycosylation is present at Asn221. The Ca(2+) site is built by Asp243, Asp253, Asp290, and Asp294. A disulfide bridge links Cys250 with Cys268. Sushi domains follow at residues 307 to 373 and 374 to 449; these read IKCP…RCKI and KDCG…RCLP. Intrachain disulfides connect Cys309–Cys358, Cys338–Cys371, Cys376–Cys429, Cys406–Cys447, and Cys451–Cys577. The 239-residue stretch at 464-702 folds into the Peptidase S1 domain; sequence IIGGQKAKMG…YVDWIKKEME (239 aa). The active-site Charge relay system is the His502. N-linked (GlcNAc...) asparagine glycosylation occurs at Asn514. Asp557 serves as the catalytic Charge relay system. N-linked (GlcNAc...) asparagine glycosylation occurs at Asn581. 2 disulfide bridges follow: Cys620/Cys639 and Cys650/Cys680. Ser654 serves as the catalytic Charge relay system.

The protein belongs to the peptidase S1 family. In terms of assembly, core component of the complement C1 complex, a calcium-dependent complex composed of 1 molecule of the C1Q subcomplex, 2 molecules of C1R and 2 molecules of C1S. The C1Q subcomplex is composed 18 subunits: 3 chains of C1QA, C1QB, and C1QC trimerize to form 6 collagen-like triple helices connected to six globular ligand-recognition modules. Within the C1 complex, C1R is a dimer of identical chains, each of which is activated by cleavage into two chains, heavy and light, connected by disulfide bonds. Post-translationally, cleaved and activated by autocatalytic processing to generate Complement C1r subcomponent heavy and light chains that are connected by disulfide bonds. The iron and 2-oxoglutarate dependent 3-hydroxylation of aspartate and asparagine is (R) stereospecific within EGF domains.

The protein localises to the secreted. It is found in the cell surface. It catalyses the reaction Selective cleavage of Lys(or Arg)-|-Ile bond in complement subcomponent C1s to form the active form of C1s (EC 3.4.21.42).. Activated by the C1Q subcomplex of the C1 complex following C1Q binding to immunoglobulins (IgG or IgM) complexed with antigens to form antigen-antibody complexes on the surface of pathogens. Immunoglobulin-binding promotes autoactivation of C1R, which results in the cleavage of the Arg-Ile bond in the catalytic domain. In terms of biological role, serine protease component of the complement C1 complex, a multiprotein complex that initiates the classical pathway of the complement system, a cascade of proteins that leads to phagocytosis and breakdown of pathogens and signaling that strengthens the adaptive immune system. C1R catalyzes the first enzymatic step in the classical complement pathway: it is activated by the C1Q subcomplex of the C1 complex, which associates with IgG or IgM immunoglobulins complexed with antigens to form antigen-antibody complexes on the surface of pathogens. Immunoglobulin-binding promotes the autocatalytic cleavage and activation of C1R. Activated C1R then cleaves and activates C1S, the second protease of the classical complement pathway. It is unclear if C1R activates C1S within single, strained C1 complexes or between neighboring C1 complexes on surfaces. The chain is Complement C1r subcomponent from Homo sapiens (Human).